A 356-amino-acid chain; its full sequence is Tyrosine recombinase XerS (356 aa).

Residues 16–121 enclose the Core-binding (CB) domain; it reads LMPWYVLEYY…ALSSLYKYLT (106 aa). The 186-residue stretch at 169–354 folds into the Tyr recombinase domain; sequence GFLTYIDQEH…VSDEQKNALD (186 aa). Catalysis depends on residues R210, K234, H306, R309, and H332. Catalysis depends on Y341, which acts as the O-(3'-phospho-DNA)-tyrosine intermediate.

This sequence belongs to the 'phage' integrase family. XerS subfamily.

The protein resides in the cytoplasm. With respect to regulation, ftsK is required for recombination. In terms of biological role, site-specific tyrosine recombinase, which acts by catalyzing the cutting and rejoining of the recombining DNA molecules. Essential to convert dimers of the bacterial chromosome into monomers to permit their segregation at cell division. This Streptococcus pneumoniae serotype 4 (strain ATCC BAA-334 / TIGR4) protein is Tyrosine recombinase XerS.